A 277-amino-acid polypeptide reads, in one-letter code: Diaminopimelate epimerase (277 aa).

Asn-11 and Asn-72 together coordinate substrate. Cys-81 acts as the Proton donor in catalysis. Substrate-binding positions include 82–83 (GN), Asn-189, and 207–208 (ER). Residue Cys-217 is the Proton acceptor of the active site. A substrate-binding site is contributed by 218–219 (GT).

This sequence belongs to the diaminopimelate epimerase family. In terms of assembly, homodimer.

It localises to the cytoplasm. It catalyses the reaction (2S,6S)-2,6-diaminopimelate = meso-2,6-diaminopimelate. It functions in the pathway amino-acid biosynthesis; L-lysine biosynthesis via DAP pathway; DL-2,6-diaminopimelate from LL-2,6-diaminopimelate: step 1/1. Its function is as follows. Catalyzes the stereoinversion of LL-2,6-diaminopimelate (L,L-DAP) to meso-diaminopimelate (meso-DAP), a precursor of L-lysine and an essential component of the bacterial peptidoglycan. This Hydrogenobaculum sp. (strain Y04AAS1) protein is Diaminopimelate epimerase.